A 141-amino-acid chain; its full sequence is ATP synthase epsilon chain (141 aa).

It belongs to the ATPase epsilon chain family. F-type ATPases have 2 components, CF(1) - the catalytic core - and CF(0) - the membrane proton channel. CF(1) has five subunits: alpha(3), beta(3), gamma(1), delta(1), epsilon(1). CF(0) has three main subunits: a, b and c.

It localises to the cell inner membrane. Functionally, produces ATP from ADP in the presence of a proton gradient across the membrane. The polypeptide is ATP synthase epsilon chain (Pseudomonas savastanoi pv. phaseolicola (strain 1448A / Race 6) (Pseudomonas syringae pv. phaseolicola (strain 1448A / Race 6))).